A 310-amino-acid polypeptide reads, in one-letter code: Mitochondrial citrate transporter F (310 aa).

3 Solcar repeats span residues 23-108, 115-207, and 216-303; these read KKVH…LKNH, PPGL…FKRL, and DNMG…HKKL. A run of 6 helical transmembrane segments spans residues 29-49, 85-105, 122-142, 186-206, 222-242, and 275-296; these read FWFG…LDLV, SAAI…YEEL, IGMA…ADVL, NSTR…TFKR, FTAS…VDVI, and AFRG…TFIF.

It belongs to the mitochondrial carrier (TC 2.A.29) family.

The protein localises to the mitochondrion inner membrane. In terms of biological role, mitochondrial transporter that does not mediate citrate export from mitochondria to cytoplasm. Its exact function has still to be determined. The protein is Mitochondrial citrate transporter F of Aspergillus niger (strain ATCC 1015 / CBS 113.46 / FGSC A1144 / LSHB Ac4 / NCTC 3858a / NRRL 328 / USDA 3528.7).